Reading from the N-terminus, the 550-residue chain is Glucose-6-phosphate isomerase (550 aa).

Residues G163–S164, S214–T219, Q358, E362, H393, and K515 contribute to the D-glucose 6-phosphate site. E362 acts as the Proton donor in catalysis. Residues H393 and K515 contribute to the active site.

Belongs to the GPI family. Homodimer.

It localises to the cytoplasm. The enzyme catalyses alpha-D-glucose 6-phosphate = beta-D-fructose 6-phosphate. It functions in the pathway carbohydrate degradation; glycolysis; D-glyceraldehyde 3-phosphate and glycerone phosphate from D-glucose: step 2/4. Its function is as follows. In the cytoplasm, catalyzes the conversion of glucose-6-phosphate to fructose-6-phosphate, the second step in glycolysis, and the reverse reaction during gluconeogenesis. The sequence is that of Glucose-6-phosphate isomerase (PGI1) from Candida albicans (strain SC5314 / ATCC MYA-2876) (Yeast).